The chain runs to 196 residues: Shikimate kinase (196 aa).

32–37 (GAGKSA) contacts ATP. Position 36 (serine 36) interacts with Mg(2+). The substrate site is built by aspartate 54, arginine 78, and glycine 100. An ATP-binding site is contributed by arginine 138. Substrate is bound at residue arginine 157. Arginine 174 lines the ATP pocket.

The protein belongs to the shikimate kinase family. As to quaternary structure, monomer. Mg(2+) is required as a cofactor.

The protein resides in the cytoplasm. It carries out the reaction shikimate + ATP = 3-phosphoshikimate + ADP + H(+). It participates in metabolic intermediate biosynthesis; chorismate biosynthesis; chorismate from D-erythrose 4-phosphate and phosphoenolpyruvate: step 5/7. Functionally, catalyzes the specific phosphorylation of the 3-hydroxyl group of shikimic acid using ATP as a cosubstrate. The chain is Shikimate kinase from Rhizobium leguminosarum bv. trifolii (strain WSM2304).